The primary structure comprises 120 residues: Large ribosomal subunit protein bL19 (120 aa).

This sequence belongs to the bacterial ribosomal protein bL19 family.

In terms of biological role, this protein is located at the 30S-50S ribosomal subunit interface and may play a role in the structure and function of the aminoacyl-tRNA binding site. This chain is Large ribosomal subunit protein bL19, found in Chlorobium phaeobacteroides (strain DSM 266 / SMG 266 / 2430).